Here is a 769-residue protein sequence, read N- to C-terminus: MVRTKNQSSSSSASSSTKSPVKISGGGGGGGGSSSSTNRSRSCSEALIDDGKSSSKLSSNRQRTTTTITTTTTTPGSSPDDDTTDADLTPTSGNVPRGGQSVHKQNLYVVSFPIIFLFNVLRSLIYQLFCIFRYLYGASTKVIYRSPHRRDCNIEIVVQNSKEQQAIICPLEGSGVNIEQAQILPQRQRALQTLEMAASRGGTGAGGYSPGPGDPLLAKQKHHHRRAFEYISKALKIDEENEGHKELAIELYRKGIKELEDGIAVDCWSGRGDVWDRAQRLHEKMQTNLSMARDRLHFLALREEDLQMQRLSLKEQPKKQLPHKFKQPMLVGQTTTSSGSSSSSRASAEPPKITLRSSGYGPKTGGATTSKAVPAASGRKLTIGNKRPGNLAVANKSQTLPRNLGSKTTSTSVGAALQRQPGKTAATPPAVRRQFSSGRNTPPQRSRTPINNNAASGSGSGASTPLISVKGVEQKLVQLILDEIVEGGAKVEWSDIAGQDVAKQALQEMVILPSVRPELFTGLRAPAKGLLLFGPPGNGKTLLARAVATECSATFLNISAASLTSKYVGDGEKLVRALFAVARHMQPSIIFIDEVDSLLSERSSNEHEASRRLKTEFLVEFDGLPGNPEGDRIVVLAATNRPQELDEAALRRFTKRVYVSLPGVQTRELLLSRLLQKQGSPLDTEALARLAKITDGYSGSDLTALAKDAALEPIRELNVEQVKCLDISAMRPITEKDFHNSLKRIRRSVAPQSLNSYEKWSQDYGDITI.

A disordered region spans residues 1-100 (MVRTKNQSSS…TSGNVPRGGQ (100 aa)). Residues 1–113 (MVRTKNQSSS…KQNLYVVSFP (113 aa)) lie on the Cytoplasmic side of the membrane. The required for localization to punctate cytoplasmic foci stretch occupies residues 1 to 201 (MVRTKNQSSS…QTLEMAASRG (201 aa)). Residues 8 to 19 (SSSSSASSSTKS) show a composition bias toward low complexity. The segment covering 24–33 (SGGGGGGGGS) has biased composition (gly residues). The segment covering 54-63 (SSKLSSNRQR) has biased composition (polar residues). Over residues 64–78 (TTTTITTTTTTPGSS) the composition is skewed to low complexity. The segment at residues 114–134 (IIFLFNVLRSLIYQLFCIFRY) is an intramembrane region (helical). Residues 135 to 769 (LYGASTKVIY…WSQDYGDITI (635 aa)) are Cytoplasmic-facing. The tract at residues 199 to 769 (SRGGTGAGGY…WSQDYGDITI (571 aa)) is sufficient for interaction with microtubules and microtubule severing. Residues 224-299 (HRRAFEYISK…SMARDRLHFL (76 aa)) form the MIT domain. The interval 314 to 462 (KEQPKKQLPH…NAASGSGSGA (149 aa)) is disordered. Positions 334-344 (TTTSSGSSSSS) are enriched in low complexity. Composition is skewed to polar residues over residues 395–413 (NKSQ…STSV) and 434–450 (QFSS…RTPI). Residues 451-462 (NNNAASGSGSGA) show a composition bias toward low complexity. A required for interaction with microtubules region spans residues 452–466 (NNAASGSGSGASTPL). Residue 534–541 (GPPGNGKT) coordinates ATP.

The protein belongs to the AAA ATPase family. Spastin subfamily. Homohexamer. The homohexamer is stabilized by ATP-binding. The homohexamer may adopt a ring conformation through which microtubules pass prior to being severed. Interacts with microtubules. Interacts with atl; may be involved in microtubule dynamics.

It localises to the membrane. It is found in the cytoplasm. The protein localises to the cytoskeleton. The protein resides in the microtubule organizing center. Its subcellular location is the centrosome. It localises to the chromosome. It is found in the lipid droplet. It catalyses the reaction n ATP + n H2O + a microtubule = n ADP + n phosphate + (n+1) alpha/beta tubulin heterodimers.. Functionally, ATP-dependent microtubule severing protein. Stimulates microtubule minus-end depolymerization and poleward microtubule flux in the mitotic spindle. Regulates microtubule stability in the neuromuscular junction synapse. Involved in lipid metabolism by regulating the size and distribution of lipid droplets. Involved in axon regeneration by regulating microtubule severing. The chain is Spastin from Drosophila virilis (Fruit fly).